A 142-amino-acid chain; its full sequence is Large ribosomal subunit protein uL11 (142 aa).

The protein belongs to the universal ribosomal protein uL11 family. As to quaternary structure, part of the ribosomal stalk of the 50S ribosomal subunit. Interacts with L10 and the large rRNA to form the base of the stalk. L10 forms an elongated spine to which L12 dimers bind in a sequential fashion forming a multimeric L10(L12)X complex. In terms of processing, one or more lysine residues are methylated.

Its function is as follows. Forms part of the ribosomal stalk which helps the ribosome interact with GTP-bound translation factors. This is Large ribosomal subunit protein uL11 from Mycolicibacterium vanbaalenii (strain DSM 7251 / JCM 13017 / BCRC 16820 / KCTC 9966 / NRRL B-24157 / PYR-1) (Mycobacterium vanbaalenii).